The chain runs to 512 residues: Acid-sensing ion channel 2 (512 aa).

The Cytoplasmic segment spans residues 1-42 (MDLKESPSEGSLQPSSIQIFANTSTLHGIRHIFVYGPLTIRR). Residues Ser8 and Ser11 each carry the phosphoserine modification. Residues 43 to 64 (VLWAVAFVGSLGLLLVESSERV) traverse the membrane as a helical segment. The Extracellular segment spans residues 65–424 (SYYFSYQHVT…ETIEQKKAYE (360 aa)). Disulfide bonds link Cys92–Cys193, Cys289–Cys364, Cys307–Cys360, Cys311–Cys358, Cys320–Cys342, and Cys322–Cys334. N-linked (GlcNAc...) asparagine glycosylation is found at Asn365 and Asn392. The helical transmembrane segment at 425–439 (VAALLGDIGGQMGLF) threads the bilayer. The Cytoplasmic portion of the chain corresponds to 440–512 (IGASILTILE…TLGTLEEIAC (73 aa)). The short motif at 441-443 (GAS) is the GAS motif; ion selectivity filter element.

It belongs to the amiloride-sensitive sodium channel (TC 1.A.6) family. ASIC2 subfamily. Can form homotrimers. Heterotrimer; forms functional heterotrimers producing channel with different properties. Forms heterotrimers with ASIC1; while ASIC1 determines current amplitude, ASIC2 influences the properties of the current. Forms heterotrimers with ASIC3; resulting in channels with distinct properties. Interacts with STOM; STOM regulates the gating of ASIC2-containing channels. Interacts with PICK1; promotes ASIC3 phosphorylation by PKC and activation of ASIC2/ASIC3 heterotrimers. Expressed in brain, cerebellum, trigeminal sensory ganglia and also detected in testis.

The protein localises to the cell membrane. The catalysed reaction is Na(+)(in) = Na(+)(out). The enzyme catalyses K(+)(in) = K(+)(out). It catalyses the reaction Li(+)(in) = Li(+)(out). Its activity is regulated as follows. Inhibited by the diuretic drug amiloride. Inhibited by gadolinium ions, the heterotrimer with ASIC3 being more sensitive. Heterotrimer composed of ASIC1 and ASIC2 are inhibited by the snake venom mambalgin-1. Forms pH-gated trimeric sodium channels that act as postsynaptic excitatory sensors in the nervous system. Upon extracellular acidification, these channels generate rapid, transient inward currents that fully desensitize. Highly selective for sodium, they are permeable to other cations. By forming heterotrimeric channels with ASIC1, could contribute to synaptic plasticity, learning, and memory. Additionally, as acid sensors at nerve terminals, plays a role in mechanosensation and phototransduction. This Homo sapiens (Human) protein is Acid-sensing ion channel 2.